A 933-amino-acid chain; its full sequence is 2-oxoglutarate dehydrogenase E1 component (933 aa).

It belongs to the alpha-ketoglutarate dehydrogenase family. Homodimer. Part of the 2-oxoglutarate dehydrogenase (OGDH) complex composed of E1 (2-oxoglutarate dehydrogenase), E2 (dihydrolipoamide succinyltransferase) and E3 (dihydrolipoamide dehydrogenase); the complex contains multiple copies of the three enzymatic components (E1, E2 and E3). Requires thiamine diphosphate as cofactor.

It catalyses the reaction N(6)-[(R)-lipoyl]-L-lysyl-[protein] + 2-oxoglutarate + H(+) = N(6)-[(R)-S(8)-succinyldihydrolipoyl]-L-lysyl-[protein] + CO2. Functionally, E1 component of the 2-oxoglutarate dehydrogenase (OGDH) complex which catalyzes the decarboxylation of 2-oxoglutarate, the first step in the conversion of 2-oxoglutarate to succinyl-CoA and CO(2). This is 2-oxoglutarate dehydrogenase E1 component (sucA) from Rickettsia typhi (strain ATCC VR-144 / Wilmington).